Reading from the N-terminus, the 720-residue chain is Phosphoribosylformylglycinamidine synthase subunit PurL (720 aa).

The active site involves His47. Residues Tyr50 and Lys89 each contribute to the ATP site. Glu91 lines the Mg(2+) pocket. Substrate contacts are provided by residues 92–95 (SHNH) and Arg114. Catalysis depends on His93, which acts as the Proton acceptor. Asp115 contributes to the Mg(2+) binding site. Gln238 provides a ligand contact to substrate. Mg(2+) is bound at residue Asp266. Residue 310 to 312 (ESQ) coordinates substrate. ATP is bound by residues Asp488 and Gly525. Asn526 contributes to the Mg(2+) binding site. Position 528 (Ser528) interacts with substrate.

Belongs to the FGAMS family. As to quaternary structure, monomer. Part of the FGAM synthase complex composed of 1 PurL, 1 PurQ and 2 PurS subunits.

Its subcellular location is the cytoplasm. The catalysed reaction is N(2)-formyl-N(1)-(5-phospho-beta-D-ribosyl)glycinamide + L-glutamine + ATP + H2O = 2-formamido-N(1)-(5-O-phospho-beta-D-ribosyl)acetamidine + L-glutamate + ADP + phosphate + H(+). It participates in purine metabolism; IMP biosynthesis via de novo pathway; 5-amino-1-(5-phospho-D-ribosyl)imidazole from N(2)-formyl-N(1)-(5-phospho-D-ribosyl)glycinamide: step 1/2. Part of the phosphoribosylformylglycinamidine synthase complex involved in the purines biosynthetic pathway. Catalyzes the ATP-dependent conversion of formylglycinamide ribonucleotide (FGAR) and glutamine to yield formylglycinamidine ribonucleotide (FGAM) and glutamate. The FGAM synthase complex is composed of three subunits. PurQ produces an ammonia molecule by converting glutamine to glutamate. PurL transfers the ammonia molecule to FGAR to form FGAM in an ATP-dependent manner. PurS interacts with PurQ and PurL and is thought to assist in the transfer of the ammonia molecule from PurQ to PurL. The polypeptide is Phosphoribosylformylglycinamidine synthase subunit PurL (Cereibacter sphaeroides (strain KD131 / KCTC 12085) (Rhodobacter sphaeroides)).